We begin with the raw amino-acid sequence, 496 residues long: Galactokinase (496 aa).

N-acetylalanine is present on Ala2. Alpha-D-galactose-binding residues include Arg56, Glu62, His63, and Asp65. ATP-binding residues include Gly161, Gly163, Ser165, and Ser166. Asp210 provides a ligand contact to alpha-D-galactose. The active-site Proton acceptor is the Asp210. Residues Ser252, Gln253, and Lys254 each coordinate ATP. Alpha-D-galactose is bound at residue Tyr262.

Belongs to the GHMP kinase family. GalK subfamily. It depends on Mg(2+) as a cofactor. Mn(2+) is required as a cofactor. Ca(2+) serves as cofactor. As to expression, expressed in roots, stems, leaves, flowers and young siliques. Higher expression in the elongating middle stem region than in the lower or upper stem region.

The catalysed reaction is alpha-D-galactose + ATP = alpha-D-galactose 1-phosphate + ADP + H(+). Its pathway is carbohydrate metabolism; galactose metabolism. In terms of biological role, sugar-1-kinase with a very high substrate specificity for the alpha-anomeric configuration of D-galacose (D-Gal). Also efficiently converts 2-deoxy-D-Gal to 2-deoxy-D-al-1-phosphate. The polypeptide is Galactokinase (GAL1) (Arabidopsis thaliana (Mouse-ear cress)).